Here is a 594-residue protein sequence, read N- to C-terminus: ATP-dependent lipid A-core flippase (594 aa).

A run of 6 helical transmembrane segments spans residues 35–55, 64–84, 135–155, 161–181, 262–282, and 289–309; these read FVLA…IPKV, FGGS…GVAL, AVIF…ITLV, VVAL…VVAV, VTAF…MIQA, and IGGF…LKHL. The 283-residue stretch at 36–318 folds into the ABC transmembrane type-1 domain; sequence VLAIIAMGLV…LADLNQPLQR (283 aa). Positions 350-588 constitute an ABC transporter domain; the sequence is LVFDNVGFRY…NGLYAGLHRI (239 aa). 384-391 is an ATP binding site; that stretch reads GPSGSGKT.

It belongs to the ABC transporter superfamily. Lipid exporter (TC 3.A.1.106) family. As to quaternary structure, homodimer.

It localises to the cell inner membrane. It catalyses the reaction ATP + H2O + lipid A-core oligosaccharideSide 1 = ADP + phosphate + lipid A-core oligosaccharideSide 2.. Involved in lipopolysaccharide (LPS) biosynthesis. Translocates lipid A-core from the inner to the outer leaflet of the inner membrane. Transmembrane domains (TMD) form a pore in the inner membrane and the ATP-binding domain (NBD) is responsible for energy generation. The chain is ATP-dependent lipid A-core flippase from Cupriavidus metallidurans (strain ATCC 43123 / DSM 2839 / NBRC 102507 / CH34) (Ralstonia metallidurans).